Here is a 33-residue protein sequence, read N- to C-terminus: Gaegurin-3 (33 aa).

A disulfide bond links C27 and C33.

The protein belongs to the frog skin active peptide (FSAP) family. Brevinin subfamily. Monomer. In terms of tissue distribution, expressed by the skin glands.

Its subcellular location is the secreted. Has a non-hemolytic activity. Has a broad spectrum of activity against both Gram-positive and Gram-negative bacteria, fungi and protozoa. The chain is Gaegurin-3 (GGN3) from Glandirana rugosa (Japanese wrinkled frog).